The chain runs to 465 residues: Crh-like protein ARB_05253 (465 aa).

The first 21 residues, 1 to 21 (MKLSLAAALLGALAVSAQTST), serve as a signal peptide directing secretion. One can recognise a GH16 domain in the interval 22 to 223 (ECNPLKQKCP…WAGGETDFSK (202 aa)). C23 and C30 are joined by a disulfide. Catalysis depends on E114, which acts as the Nucleophile. The active-site Proton donor is the E118. Residues E118, W200, and T211 each coordinate chitin. Disordered regions lie at residues 261 to 325 (GQVN…STMT) and 339 to 442 (TGTG…PGST). Residue N264 is glycosylated (N-linked (GlcNAc...) asparagine). The segment covering 277 to 287 (SSTLPSSPSTS) has biased composition (low complexity). Polar residues predominate over residues 304 to 325 (QAPNTGSSPSNTLTNGPSSTMT). Composition is skewed to low complexity over residues 339–348 (TGTGGVVTPT), 361–376 (TSRS…SASS), and 383–397 (MTTS…TGTG). A lipid anchor (GPI-anchor amidated serine) is attached at S441. Residues 442–465 (TGAIHSVSNALLLSFCAIAAWALV) constitute a propeptide, removed in mature form.

This sequence belongs to the glycosyl hydrolase 16 family. CRH1 subfamily. In terms of processing, the GPI-anchor is attached to the protein in the endoplasmic reticulum and serves to target the protein to the cell surface. There, the glucosamine-inositol phospholipid moiety is cleaved off and the GPI-modified mannoprotein is covalently attached via its lipidless GPI glycan remnant to the 1,6-beta-glucan of the outer cell wall layer.

Its subcellular location is the secreted. It localises to the cell wall. The protein localises to the membrane. It catalyses the reaction Random endo-hydrolysis of N-acetyl-beta-D-glucosaminide (1-&gt;4)-beta-linkages in chitin and chitodextrins.. In terms of biological role, dual chitinase/transglycosylase that plays a role in cell wall architecture. Chitinase and transglycosylase activities are coupled. Required for the polysaccharide cross-linking at the septa and the cell wall. More specifically, transfers chitin to 1,6-beta-glucan in the cell wall. This Arthroderma benhamiae (strain ATCC MYA-4681 / CBS 112371) (Trichophyton mentagrophytes) protein is Crh-like protein ARB_05253.